A 285-amino-acid chain; its full sequence is UPF0354 protein SH1179 (285 aa).

This sequence belongs to the UPF0354 family.

This is UPF0354 protein SH1179 from Staphylococcus haemolyticus (strain JCSC1435).